A 49-amino-acid polypeptide reads, in one-letter code: Disintegrin eristostatin (49 aa).

The Disintegrin domain maps to Gln-1–Gly-49. Intrachain disulfides connect Cys-5/Cys-14, Cys-10/Cys-35, Cys-11/Cys-40, and Cys-23/Cys-42. The Cell attachment site signature appears at Arg-27–Asp-29.

The protein belongs to the venom metalloproteinase (M12B) family. P-II subfamily. P-IIa sub-subfamily. As to quaternary structure, monomer. Expressed by the venom gland.

It localises to the secreted. Functionally, is a potent inhibitor of ADP-induced platelet aggregation. Acts by binding to alpha-IIb/beta-3 (ITGA2B/ITGB3) receptor on the platelet surface. Binds with the same high affinity to resting and activated platelets. Also binds the alpha-4/beta-1 (ITGA4/ITGB1) integrin. Is a potent inhibitor of human and murine melanoma metastases in mouse model systems, also due to the inhibition of binding between the alpha-4/beta-1 integrin and the vascular cell adhesion protein VCAM1. Reacts neither with the integrin alpha-V/beta-3 (ITGAV/ITGB3) vitronectin receptor nor with the integrin alpha-5/beta-1 (ITGA5/ITGB1) fibronectin receptor. Has no effect on cell proliferation or angiogenesis. Specifically inhibits cell migration on fibronectin, but not that on collagen IV or laminin. May involve fibronectin-binding integrins that mediate cell migration. This Eristicophis macmahoni (Leaf-nosed viper) protein is Disintegrin eristostatin.